Reading from the N-terminus, the 335-residue chain is Ferredoxin--NADP reductase (335 aa).

Positions 34, 42, 47, 87, 121, 287, and 328 each coordinate FAD.

It belongs to the ferredoxin--NADP reductase type 2 family. As to quaternary structure, homodimer. It depends on FAD as a cofactor.

The enzyme catalyses 2 reduced [2Fe-2S]-[ferredoxin] + NADP(+) + H(+) = 2 oxidized [2Fe-2S]-[ferredoxin] + NADPH. This Rickettsia felis (strain ATCC VR-1525 / URRWXCal2) (Rickettsia azadi) protein is Ferredoxin--NADP reductase.